We begin with the raw amino-acid sequence, 277 residues long: Translation initiation factor 2 subunit alpha (277 aa).

One can recognise an S1 motif domain in the interval 22-93 (GEIVVGTVQE…KRGQVDVSLK (72 aa)).

It belongs to the eIF-2-alpha family. In terms of assembly, heterotrimer composed of an alpha, a beta and a gamma chain.

Its function is as follows. eIF-2 functions in the early steps of protein synthesis by forming a ternary complex with GTP and initiator tRNA. The chain is Translation initiation factor 2 subunit alpha (eif2a) from Aeropyrum pernix (strain ATCC 700893 / DSM 11879 / JCM 9820 / NBRC 100138 / K1).